The following is a 562-amino-acid chain: Terpene synthase 2 (562 aa).

Residues Asp-315, Asp-319, Asp-459, and Glu-467 each coordinate Mg(2+). The DDXXD motif signature appears at 315–319; that stretch reads DDEYD.

It belongs to the terpene synthase family. Tpsa subfamily. Requires Mg(2+) as cofactor. It depends on Mn(2+) as a cofactor. As to expression, expressed at low levels in stems, leaves, roots and fruits.

It catalyses the reaction (2E,6E)-farnesyl diphosphate = delta-cadinene + diphosphate. The catalysed reaction is (2E,6E)-farnesyl diphosphate = alpha-cadinene + diphosphate. It carries out the reaction (2E,6E)-farnesyl diphosphate + H2O = (-)-delta-cadinol + diphosphate. It participates in secondary metabolite biosynthesis; terpenoid biosynthesis. In terms of biological role, sesquiterpene synthase involved in the biosynthesis of volatile compounds that contribute to the characteristic flavors of black pepper. Mediates the conversion of (2E,6E)-farnesyl diphosphate (FPP) into alpha-cadinene, delta-cadinene and delta-cadinol. In Piper nigrum (Black pepper), this protein is Terpene synthase 2.